The primary structure comprises 985 residues: MTVELKRNLLESSVEDIDLESKKQRVDNDVDQNTSSVDEDIDYEEDYDEVNDVPIDSGNSLFNNNAKWQETISKVVKSVVSIHFSQVAPFDSEAALVSEATGFIVDAKLGIILTNRHVVGPGPFIGYAIFDNHEECDVIPIYRDPVHDFGFLKFDPSKLKYIEVTALELKPSLAKVGSEIRVVGNDAGEKLSILSGFISRLDRNAPDYGELTYNDFNTEYIQAAAAASGGSSGSPVITVEGYAVALQAGGSSEASTDFFLPLDRVVRALQCVQTDKPITRGTIQTQWVLKPFDECRRLGLSEDREKEARKRFPGKTGLLVAEAILREGPAYNKVQEGDTLISINGTPICSFIQVDNILDSSVGDEIIIVVQRGSKDISFRCTVGDLHIITPSRYVEVCGANFHELSYQMARCYALPVKGVFVASATGSFDLDPKEKTGWVIDFVDNKETPTLDDFIEVMKTIPDEKRVIVKFHNLTDVQTQRITSVYIDRHWCSEFRIYTRNDKTGIWDYEKITEKLPPLPIKPQKAKILDLPINDNKKLAKMSHSLCVVHSVIAITMDSMEPEPTNGCGLVLDAEKGYVIVSRSFVPHDCLNTFVSFAESILVPAKVVFLHPTQNYAIVQYDPSLVDAPVCTPVLANERLERGDETNFIGYMYSNTLISSKTKVNGISSLSVPNDIIPRYRATNLEVISIDSNISTKCKSGILAADDGTVRAIWLSCMGNKEKLYLMGLDVVDIKEVVDILRAGKNPKVSIVDAGFDSISLLQARIRGVPEEWIKMMEEESENRLQFISVTRNSYTTIKERLEPGDIILSVNGKLVKRMRDIGGVVGTDDDTDIESELLFKVVRDAKVIDLKIKTVQIEETTRIVVFAGCVLQAPHHAVRQVKTSIPSEVYAVSRGTSSLALQYGIEVTNFITHVNDQSTPDLDTFLKVVKEIPDNTYCKLRLMTFDDVPFAISLKTNYHYFPTVELRKNPKTGSWIENDISET.

The segment at 79–269 is serine protease; that stretch reads VVSIHFSQVA…LPLDRVVRAL (191 aa). Catalysis depends on charge relay system residues H117, D148, and S231. PDZ domains follow at residues 287–385 and 771–847; these read WVLK…TVGD and PEEW…VRDA.

This sequence belongs to the peptidase S1C family.

The protein localises to the nucleus. Functionally, nuclear serine protease which mediates apoptosis. In Kluyveromyces lactis (strain ATCC 8585 / CBS 2359 / DSM 70799 / NBRC 1267 / NRRL Y-1140 / WM37) (Yeast), this protein is Pro-apoptotic serine protease NMA111 (NMA111).